Consider the following 436-residue polypeptide: Proline--tRNA ligase (436 aa).

Belongs to the class-II aminoacyl-tRNA synthetase family. ProS type 2 subfamily. In terms of assembly, homodimer.

The protein resides in the cytoplasm. It catalyses the reaction tRNA(Pro) + L-proline + ATP = L-prolyl-tRNA(Pro) + AMP + diphosphate. Its function is as follows. Catalyzes the attachment of proline to tRNA(Pro) in a two-step reaction: proline is first activated by ATP to form Pro-AMP and then transferred to the acceptor end of tRNA(Pro). In Neorickettsia sennetsu (strain ATCC VR-367 / Miyayama) (Ehrlichia sennetsu), this protein is Proline--tRNA ligase.